Reading from the N-terminus, the 377-residue chain is Chaperone protein DnaJ (377 aa).

The 66-residue stretch at 5–70 (DYYEVLGVGR…NKKAAYDQFG (66 aa)) folds into the J domain. Residues 133-211 (GLTKELRIPT…CHGDGRVEKT (79 aa)) form a CR-type zinc finger. 8 residues coordinate Zn(2+): C146, C149, C163, C166, C185, C188, C199, and C202. CXXCXGXG motif repeat units follow at residues 146 to 153 (CDVCDGSG), 163 to 170 (CGTCHGQG), 185 to 192 (CPTCHGRG), and 199 to 206 (CTKCHGDG).

This sequence belongs to the DnaJ family. In terms of assembly, homodimer. Zn(2+) serves as cofactor.

Its subcellular location is the cytoplasm. In terms of biological role, participates actively in the response to hyperosmotic and heat shock by preventing the aggregation of stress-denatured proteins and by disaggregating proteins, also in an autonomous, DnaK-independent fashion. Unfolded proteins bind initially to DnaJ; upon interaction with the DnaJ-bound protein, DnaK hydrolyzes its bound ATP, resulting in the formation of a stable complex. GrpE releases ADP from DnaK; ATP binding to DnaK triggers the release of the substrate protein, thus completing the reaction cycle. Several rounds of ATP-dependent interactions between DnaJ, DnaK and GrpE are required for fully efficient folding. Also involved, together with DnaK and GrpE, in the DNA replication of plasmids through activation of initiation proteins. The protein is Chaperone protein DnaJ of Shewanella sp. (strain MR-4).